Here is a 263-residue protein sequence, read N- to C-terminus: Putative protein JayE (263 aa).

This sequence belongs to the Mu gp47/PBSX XkdT family.

The polypeptide is Putative protein JayE (jayE) (Escherichia coli (strain K12)).